A 160-amino-acid chain; its full sequence is Phosphopantetheine adenylyltransferase (160 aa).

Ser-10 is a substrate binding site. ATP contacts are provided by residues 10–11 (SF) and His-18. 3 residues coordinate substrate: Lys-42, Thr-74, and Arg-88. ATP contacts are provided by residues 89-91 (GLR), Glu-99, and 124-130 (FYYISSR).

The protein belongs to the bacterial CoaD family. As to quaternary structure, homohexamer. Requires Mg(2+) as cofactor.

Its subcellular location is the cytoplasm. It catalyses the reaction (R)-4'-phosphopantetheine + ATP + H(+) = 3'-dephospho-CoA + diphosphate. It participates in cofactor biosynthesis; coenzyme A biosynthesis; CoA from (R)-pantothenate: step 4/5. In terms of biological role, reversibly transfers an adenylyl group from ATP to 4'-phosphopantetheine, yielding dephospho-CoA (dPCoA) and pyrophosphate. In Bdellovibrio bacteriovorus (strain ATCC 15356 / DSM 50701 / NCIMB 9529 / HD100), this protein is Phosphopantetheine adenylyltransferase.